A 125-amino-acid chain; its full sequence is Insulin growth factor-like family member 3 (125 aa).

The first 24 residues, 1–24, serve as a signal peptide directing secretion; that stretch reads MRPRCCILALVCWITVFLLQCSKG.

This sequence belongs to the IGFL family. Detected in the cerebellum.

The protein resides in the secreted. In terms of biological role, potential ligand of the IGFLR1 cell membrane receptor. This chain is Insulin growth factor-like family member 3 (IGFL3), found in Homo sapiens (Human).